The primary structure comprises 571 residues: Glutamate--tRNA ligase (571 aa).

The 'HIGH' region motif lies at 110 to 120 (PNPNGPATLGS).

The protein belongs to the class-I aminoacyl-tRNA synthetase family. Glutamate--tRNA ligase type 2 subfamily.

The protein localises to the cytoplasm. The catalysed reaction is tRNA(Glu) + L-glutamate + ATP = L-glutamyl-tRNA(Glu) + AMP + diphosphate. In terms of biological role, catalyzes the attachment of glutamate to tRNA(Glu) in a two-step reaction: glutamate is first activated by ATP to form Glu-AMP and then transferred to the acceptor end of tRNA(Glu). The chain is Glutamate--tRNA ligase from Methanosarcina barkeri (strain Fusaro / DSM 804).